We begin with the raw amino-acid sequence, 163 residues long: uncharacterized protein (163 aa).

Residues 142–163 are disordered; sequence PQIVISEHNNTKETSPSRQFEH. Polar residues predominate over residues 153 to 163; it reads KETSPSRQFEH.

This sequence belongs to the RCAN family.

Functionally, inhibits calcineurin-dependent transcriptional responses by binding to the catalytic domain of calcineurin. This is an uncharacterized protein from Schizosaccharomyces pombe (strain 972 / ATCC 24843) (Fission yeast).